The sequence spans 411 residues: Corticotropin-releasing factor receptor 2 (411 aa).

A signal peptide (not cleaved) is located at residues 1 to 19; sequence MDAALLLSLLEANCSLALA. Residues 1–108 are Extracellular-facing; the sequence is MDAALLLSLL…EPILDDKQRK (108 aa). Residues Asn-13, Asn-41, Asn-74, Asn-86, and Asn-94 are each glycosylated (N-linked (GlcNAc...) asparagine). 3 disulfide bridges follow: Cys-14-Cys-50, Cys-40-Cys-83, and Cys-64-Cys-98. A helical transmembrane segment spans residues 109 to 139; that stretch reads YDLHYRIALIINYLGHCVSVVALVAAFLLFL. Residues 140–146 lie on the Cytoplasmic side of the membrane; that stretch reads VLRSIRC. Residues 147–171 form a helical membrane-spanning segment; sequence LRNVIHWNLITTFILRNITWFLLQL. At 172-185 the chain is on the extracellular side; it reads IDHEVHEGNEVWCR. Cys-184 and Cys-254 are joined by a disulfide. The helical transmembrane segment at 186–214 threads the bilayer; that stretch reads CVTTIFNYFVVTNFFWMFVEGCYLHTAIV. Residues 215-221 lie on the Cytoplasmic side of the membrane; sequence MTYSTEH. Residues 222–249 traverse the membrane as a helical segment; that stretch reads LRKWLFLFIGWCIPCPIIVAWAVGKLYY. Over 250–265 the chain is Extracellular; it reads ENEQCWFGKEPGDLVD. Residues 266-291 traverse the membrane as a helical segment; sequence YIYQGPIILVLLINFVFLFNIVRILM. Residues 292-302 lie on the Cytoplasmic side of the membrane; it reads TKLRASTTSET. The chain crosses the membrane as a helical span at residues 303 to 327; that stretch reads IQYRKAVKATLVLLPLLGITYMLFF. Over 328-334 the chain is Extracellular; sequence VNPGEDD. A helical transmembrane segment spans residues 335–364; it reads LSQIVFIYFNSFLQSFQGFFVSVFYCFFNG. At 365–411 the chain is on the cytoplasmic side; that stretch reads EVRSALRKRWHRWQDHHALRVPVARAMSIPTSPTRISFHSIKQTAAV.

The protein belongs to the G-protein coupled receptor 2 family. Monomer. Interacts (via N-terminal extracellular domain) with CRF, UCN, UCN2 and UCN3. In terms of processing, a N-glycosylation site within the signal peptide impedes its proper cleavage and function. In terms of tissue distribution, predominantly expressed in limbic regions of the brain such as the lateral septum, the entorhinal cortex, the hypothalamic ventromedial nucleus and several amygdaloid nuclei. Also detectable in lung, kidney and heart.

Its subcellular location is the cell membrane. G-protein coupled receptor for CRH (corticotropin-releasing factor), UCN (urocortin), UCN2 and UCN3. Has high affinity for UCN. Ligand binding causes a conformation change that triggers signaling via guanine nucleotide-binding proteins (G proteins) and down-stream effectors, such as adenylate cyclase. Promotes the activation of adenylate cyclase, leading to increased intracellular cAMP levels. This Rattus norvegicus (Rat) protein is Corticotropin-releasing factor receptor 2 (Crhr2).